Consider the following 226-residue polypeptide: Urease accessory protein UreF (226 aa).

This sequence belongs to the UreF family. In terms of assembly, ureD, UreF and UreG form a complex that acts as a GTP-hydrolysis-dependent molecular chaperone, activating the urease apoprotein by helping to assemble the nickel containing metallocenter of UreC. The UreE protein probably delivers the nickel.

The protein resides in the cytoplasm. Required for maturation of urease via the functional incorporation of the urease nickel metallocenter. The chain is Urease accessory protein UreF from Burkholderia mallei (strain NCTC 10247).